The following is a 484-amino-acid chain: tRNA-2-methylthio-N(6)-dimethylallyladenosine synthase (484 aa).

One can recognise an MTTase N-terminal domain in the interval 36–153; the sequence is GKLYIKTHGC…LPELIRARRE (118 aa). Residues Cys45, Cys82, Cys116, Cys190, Cys194, and Cys197 each contribute to the [4Fe-4S] cluster site. The region spanning 176-415 is the Radical SAM core domain; that stretch reads RAEGPSAFVS…HISAHAASIS (240 aa). Positions 416–479 constitute a TRAM domain; sequence QSMVGSVQRV…SNSLRGRIQL (64 aa). A disordered region spans residues 428-450; that stretch reads EGPSRRDPNELTGKSENMRPVNF.

Belongs to the methylthiotransferase family. MiaB subfamily. Monomer. The cofactor is [4Fe-4S] cluster.

Its subcellular location is the cytoplasm. It carries out the reaction N(6)-dimethylallyladenosine(37) in tRNA + (sulfur carrier)-SH + AH2 + 2 S-adenosyl-L-methionine = 2-methylsulfanyl-N(6)-dimethylallyladenosine(37) in tRNA + (sulfur carrier)-H + 5'-deoxyadenosine + L-methionine + A + S-adenosyl-L-homocysteine + 2 H(+). Functionally, catalyzes the methylthiolation of N6-(dimethylallyl)adenosine (i(6)A), leading to the formation of 2-methylthio-N6-(dimethylallyl)adenosine (ms(2)i(6)A) at position 37 in tRNAs that read codons beginning with uridine. This Xanthomonas oryzae pv. oryzae (strain PXO99A) protein is tRNA-2-methylthio-N(6)-dimethylallyladenosine synthase.